The sequence spans 438 residues: Probable tRNA pseudouridine synthase D (438 aa).

Aspartate 86 acts as the Nucleophile in catalysis. Residues 165–390 (GVPNFFGIQR…SKGTRREVLL (226 aa)) enclose the TRUD domain.

Belongs to the pseudouridine synthase TruD family.

It catalyses the reaction uridine(13) in tRNA = pseudouridine(13) in tRNA. In terms of biological role, could be responsible for synthesis of pseudouridine from uracil-13 in transfer RNAs. The chain is Probable tRNA pseudouridine synthase D from Methanosarcina mazei (strain ATCC BAA-159 / DSM 3647 / Goe1 / Go1 / JCM 11833 / OCM 88) (Methanosarcina frisia).